Consider the following 496-residue polypeptide: NAD(P)H-quinone oxidoreductase subunit 2, chloroplastic (496 aa).

14 helical membrane passes run 14–34 (SFLP…LDLV), 42–62 (MLVK…IQQW), 79–99 (FTTC…PLSF), 109–129 (LTEF…LSSA), 133–153 (ITIF…TGYV), 167–187 (LIIG…LYGL), 210–230 (LASW…LSLV), 244–264 (PTPV…ALTI), 281–301 (ILQI…MVET), 305–325 (RILT…IVAG), 334–354 (LVYM…IILF), 377–397 (ASCL…TGFF), 400–420 (ILLF…TGIF), and 469–489 (IYLC…VIYF).

It belongs to the complex I subunit 2 family. As to quaternary structure, NDH is composed of at least 16 different subunits, 5 of which are encoded in the nucleus.

The protein resides in the plastid. Its subcellular location is the chloroplast thylakoid membrane. The enzyme catalyses a plastoquinone + NADH + (n+1) H(+)(in) = a plastoquinol + NAD(+) + n H(+)(out). The catalysed reaction is a plastoquinone + NADPH + (n+1) H(+)(in) = a plastoquinol + NADP(+) + n H(+)(out). NDH shuttles electrons from NAD(P)H:plastoquinone, via FMN and iron-sulfur (Fe-S) centers, to quinones in the photosynthetic chain and possibly in a chloroplast respiratory chain. The immediate electron acceptor for the enzyme in this species is believed to be plastoquinone. Couples the redox reaction to proton translocation, and thus conserves the redox energy in a proton gradient. In Chara vulgaris (Common stonewort), this protein is NAD(P)H-quinone oxidoreductase subunit 2, chloroplastic.